Consider the following 239-residue polypeptide: Orotidine 5'-phosphate decarboxylase (239 aa).

Substrate contacts are provided by residues Asp-15, Lys-36, 63–72 (DLKFHDIPNT), Thr-127, Arg-189, Gln-198, Gly-218, and Arg-219. Lys-65 (proton donor) is an active-site residue.

This sequence belongs to the OMP decarboxylase family. Type 1 subfamily. As to quaternary structure, homodimer.

It catalyses the reaction orotidine 5'-phosphate + H(+) = UMP + CO2. It functions in the pathway pyrimidine metabolism; UMP biosynthesis via de novo pathway; UMP from orotate: step 2/2. In terms of biological role, catalyzes the decarboxylation of orotidine 5'-monophosphate (OMP) to uridine 5'-monophosphate (UMP). This Prochlorococcus marinus (strain MIT 9515) protein is Orotidine 5'-phosphate decarboxylase.